We begin with the raw amino-acid sequence, 247 residues long: MSHRDTLFSAPIARLGDWTFDERVAEVFPDMIQRSVPGYSNIISMIGMLAERFVQPDTQVYDLGCSLGAATLSVRRNIRHEHCRIIAVDNSPAMIERCRRHIDAYKAPTPVEVVEGDIRDITIENASMVVLNFTLQFLEPAERQALLDKIYLGLNPGGALVLSEKFSFEDAKVGELLFNMHHDFKRANGYSELEISQKRSMLENVMLTDSVETHKARLRKAGFEHSELWFQCFNFGSLVALKAGVAA.

S-adenosyl-L-methionine-binding positions include Tyr39, 64-66, 89-90, 117-118, Asn132, and Arg199; these read GCS, DN, and DI.

Belongs to the class I-like SAM-binding methyltransferase superfamily. Cx-SAM synthase family. Homodimer.

The enzyme catalyses prephenate + S-adenosyl-L-methionine = carboxy-S-adenosyl-L-methionine + 3-phenylpyruvate + H2O. In terms of biological role, catalyzes the conversion of S-adenosyl-L-methionine (SAM) to carboxy-S-adenosyl-L-methionine (Cx-SAM). This chain is Carboxy-S-adenosyl-L-methionine synthase, found in Salmonella arizonae (strain ATCC BAA-731 / CDC346-86 / RSK2980).